A 390-amino-acid chain; its full sequence is Large ribosomal subunit protein uL3y (390 aa).

A disordered region spans residues 1–36 (MSHRKFEHPRHGSLGFLPRKRASRHRGKVKAFPKDD). Basic residues predominate over residues 18–31 (PRKRASRHRGKVKA).

Belongs to the universal ribosomal protein uL3 family.

Its subcellular location is the cytoplasm. This Arabidopsis thaliana (Mouse-ear cress) protein is Large ribosomal subunit protein uL3y (ARP2).